The chain runs to 403 residues: MNSILSSVLPAPEDPVLSVIFACRDDPSPVKLNLSAGTYRTEEGKPLVLDVVRRAEQQLANDLDKEYLPLNGLPEFNKLSTKLILGDDSPALKENRVVTTQCLSGTGSLRVGAEFLATHNKESVIFVPNPTWGNHPRIFTLAGLSVQYFRYYDPKSRGLDFKGMLEDLGAAPPGAIVVLQACAHNPTGVDPTFEQWEKIRRLVRSKSLLPFFDSAYQGFASGSLDADAQAVRMFVADGGECLIAQSYAKNMGLYGERIGSLTIVCTSEDVAKKVENQVLLVVRPMYLTPPIHGASIVATILKNSDMYNDWTIELKGMADRIISMRQQLYAALEARGTPGDWSHIIKHIGMFTFTGLSEEQVRLMAKEYHIYMTYDGRISMASLSSKTVPQLADAIHAVVTRIA.

Met-1 bears the N-acetylmethionine mark. 3 residues coordinate L-aspartate: Gly-37, Trp-132, and Asn-185. Lys-249 carries the post-translational modification N6-(pyridoxal phosphate)lysine. Arg-377 is an L-aspartate binding site.

It belongs to the class-I pyridoxal-phosphate-dependent aminotransferase family. Homodimer. Pyridoxal 5'-phosphate is required as a cofactor.

Its subcellular location is the cytoplasm. The enzyme catalyses L-aspartate + 2-oxoglutarate = oxaloacetate + L-glutamate. Functionally, important for the metabolism of amino acids and Krebs-cycle related organic acids. In plants, it is involved in nitrogen metabolism and in aspects of carbon and energy metabolism. This chain is Aspartate aminotransferase, cytoplasmic isozyme 2 (ASP4), found in Arabidopsis thaliana (Mouse-ear cress).